A 481-amino-acid polypeptide reads, in one-letter code: MEKKKSMFVEQSFPEHEIGDTNKNFDEDGRDKRTGTWMTGSAHIITAVIGSGVLSLAWAIAQLGWVAGPAVLMAFSFITYFTSTMLADCYRSPDPVTGKRNYTYMEVVRSYLGGRKVQLCGLAQYGNLIGITIGYTITASISMVAVKRSNCFHKNGHNVKCATSNTPFMIIFAIIQIILSQIPNFHNLSWLSILAAVMSFCYASIGVGLSIAKAAGGGEHVRTTLTGVTVGIDVSGAEKIWRTFQAIGDIAFAYAYSTVLIEIQDTLKAGPPSENKAMKRASLVGVSTTTFFYMLCGCVGYAAFGNDAPGNFLTGFGFYEPFWLIDFANVCIAVHLIGAYQVFCQPIFQFVESQSAKRWPDNKFITGEYKIHVPCCGDFSINFLRLVWRTSYVVVTAVVAMIFPFFNDFLGLIGAASFWPLTVYFPIEMHIAQKKIPKFSFTWTWLKILSWTCFIVSLVAAAGSVQGLIQSLKDFKPFQAP.

The Cytoplasmic portion of the chain corresponds to 1 to 36 (MEKKKSMFVEQSFPEHEIGDTNKNFDEDGRDKRTGT). Transmembrane regions (helical) follow at residues 37 to 57 (WMTG…LSLA) and 58 to 78 (WAIA…FSFI). The Cytoplasmic segment spans residues 79 to 125 (TYFTSTMLADCYRSPDPVTGKRNYTYMEVVRSYLGGRKVQLCGLAQY). Residues 126 to 146 (GNLIGITIGYTITASISMVAV) form a helical membrane-spanning segment. The Extracellular portion of the chain corresponds to 147 to 167 (KRSNCFHKNGHNVKCATSNTP). Residues 168–188 (FMIIFAIIQIILSQIPNFHNL) form a helical membrane-spanning segment. The Cytoplasmic segment spans residues 189–190 (SW). Residues 191-211 (LSILAAVMSFCYASIGVGLSI) form a helical membrane-spanning segment. Residues 212–242 (AKAAGGGEHVRTTLTGVTVGIDVSGAEKIWR) lie on the Extracellular side of the membrane. Residues 243–263 (TFQAIGDIAFAYAYSTVLIEI) traverse the membrane as a helical segment. At 264-283 (QDTLKAGPPSENKAMKRASL) the chain is on the cytoplasmic side. A helical transmembrane segment spans residues 284–304 (VGVSTTTFFYMLCGCVGYAAF). Residues 305-321 (GNDAPGNFLTGFGFYEP) are Extracellular-facing. The chain crosses the membrane as a helical span at residues 322-342 (FWLIDFANVCIAVHLIGAYQV). Residues 343-385 (FCQPIFQFVESQSAKRWPDNKFITGEYKIHVPCCGDFSINFLR) are Cytoplasmic-facing. A helical transmembrane segment spans residues 386–405 (LVWRTSYVVVTAVVAMIFPF). Residues 406-408 (FND) are Extracellular-facing. Residues 409–427 (FLGLIGAASFWPLTVYFPI) traverse the membrane as a helical segment. Residues 428–447 (EMHIAQKKIPKFSFTWTWLK) are Cytoplasmic-facing. A helical membrane pass occupies residues 448-468 (ILSWTCFIVSLVAAAGSVQGL). The Extracellular segment spans residues 469–481 (IQSLKDFKPFQAP).

This sequence belongs to the amino acid/polyamine transporter 2 family. Amino acid/auxin permease (AAAP) (TC 2.A.18.2) subfamily. Expressed in roots and leaves, and at lower levels in stems and flowers. Found in the xylem parenchyma.

It is found in the cell membrane. In terms of biological role, amino acid-proton symporter. Stereospecific transporter with a broad specificity for tryptophan, proline, and neutral and acidic amino acids. Has an affinity for aspartate in a physiological range. Involved in the uptake of amino acids diffusing out of the xylem tracheids into the xylem parenchyma. This is Amino acid permease 6 (AAP6) from Arabidopsis thaliana (Mouse-ear cress).